We begin with the raw amino-acid sequence, 310 residues long: Protein-L-isoaspartate O-methyltransferase (310 aa).

Disordered regions lie at residues 1 to 42 (MSGE…AADK) and 64 to 90 (SAAAKPATAPKPTALKPAMPKPAAPSV). The segment covering 14-32 (EDLKRAPRKSEGRAGERHA) has biased composition (basic and acidic residues). The span at 64–81 (SAAAKPATAPKPTALKPA) shows a compositional bias: low complexity. The active site involves serine 157.

Belongs to the methyltransferase superfamily. L-isoaspartyl/D-aspartyl protein methyltransferase family.

It is found in the cytoplasm. It catalyses the reaction [protein]-L-isoaspartate + S-adenosyl-L-methionine = [protein]-L-isoaspartate alpha-methyl ester + S-adenosyl-L-homocysteine. Functionally, catalyzes the methyl esterification of L-isoaspartyl residues in peptides and proteins that result from spontaneous decomposition of normal L-aspartyl and L-asparaginyl residues. It plays a role in the repair and/or degradation of damaged proteins. This chain is Protein-L-isoaspartate O-methyltransferase, found in Burkholderia lata (strain ATCC 17760 / DSM 23089 / LMG 22485 / NCIMB 9086 / R18194 / 383).